The following is a 261-amino-acid chain: Phosphatidylglycerol--prolipoprotein diacylglyceryl transferase (261 aa).

Transmembrane regions (helical) follow at residues 17–37, 59–79, 94–114, and 121–141; these read FAIH…LLLG, LLFA…TLFY, IWEG…ALLW, and TSFF…LAFG. Arg-142 contributes to the a 1,2-diacyl-sn-glycero-3-phospho-(1'-sn-glycerol) binding site. 2 helical membrane passes run 174-194 and 228-248; these read PSQI…LWIY and FLGL…PMII.

This sequence belongs to the Lgt family.

The protein localises to the cell inner membrane. It carries out the reaction L-cysteinyl-[prolipoprotein] + a 1,2-diacyl-sn-glycero-3-phospho-(1'-sn-glycerol) = an S-1,2-diacyl-sn-glyceryl-L-cysteinyl-[prolipoprotein] + sn-glycerol 1-phosphate + H(+). It functions in the pathway protein modification; lipoprotein biosynthesis (diacylglyceryl transfer). Its function is as follows. Catalyzes the transfer of the diacylglyceryl group from phosphatidylglycerol to the sulfhydryl group of the N-terminal cysteine of a prolipoprotein, the first step in the formation of mature lipoproteins. In Polynucleobacter asymbioticus (strain DSM 18221 / CIP 109841 / QLW-P1DMWA-1) (Polynucleobacter necessarius subsp. asymbioticus), this protein is Phosphatidylglycerol--prolipoprotein diacylglyceryl transferase.